Here is a 136-residue protein sequence, read N- to C-terminus: Nucleoside diphosphate kinase (136 aa).

Lysine 10, phenylalanine 58, arginine 86, threonine 92, arginine 104, and asparagine 114 together coordinate ATP. Histidine 117 functions as the Pros-phosphohistidine intermediate in the catalytic mechanism.

This sequence belongs to the NDK family. Homotetramer. Requires Mg(2+) as cofactor.

The protein resides in the cytoplasm. The enzyme catalyses a 2'-deoxyribonucleoside 5'-diphosphate + ATP = a 2'-deoxyribonucleoside 5'-triphosphate + ADP. The catalysed reaction is a ribonucleoside 5'-diphosphate + ATP = a ribonucleoside 5'-triphosphate + ADP. Major role in the synthesis of nucleoside triphosphates other than ATP. The ATP gamma phosphate is transferred to the NDP beta phosphate via a ping-pong mechanism, using a phosphorylated active-site intermediate. The protein is Nucleoside diphosphate kinase of Mycobacterium avium (strain 104).